The chain runs to 140 residues: MTKLNGTGLLKGLAITFKELWKKPVTLEYPEHKEKLPPRFHGSFTLHSEKCIACGLCQQACPNKVIKVGSIKDENNKRKLASYEMEMKYCLFCGLCVEACPTNALVFNQEYELAKYRIEDIKLTLFKREEITTGEGSENA.

2 4Fe-4S ferredoxin-type domains span residues 42-71 (GSFT…VGSI) and 81-110 (ASYE…FNQE). [4Fe-4S] cluster-binding residues include Cys51, Cys54, Cys57, Cys61, Cys90, Cys93, Cys96, and Cys100.

Belongs to the complex I 23 kDa subunit family. As to quaternary structure, NDH-1 is composed of 14 different subunits. Subunits NuoA, H, J, K, L, M, N constitute the membrane sector of the complex. The cofactor is [4Fe-4S] cluster.

Its subcellular location is the cell membrane. The enzyme catalyses a quinone + NADH + 5 H(+)(in) = a quinol + NAD(+) + 4 H(+)(out). Its function is as follows. NDH-1 shuttles electrons from NADH, via FMN and iron-sulfur (Fe-S) centers, to quinones in the respiratory chain. The immediate electron acceptor for the enzyme in this species is believed to be ubiquinone. Couples the redox reaction to proton translocation (for every two electrons transferred, four hydrogen ions are translocated across the cytoplasmic membrane), and thus conserves the redox energy in a proton gradient. The protein is NADH-quinone oxidoreductase subunit I of Carboxydothermus hydrogenoformans (strain ATCC BAA-161 / DSM 6008 / Z-2901).